Consider the following 110-residue polypeptide: Parvalbumin alpha (110 aa).

Ser-2 bears the N-acetylserine mark. Residues Ser-2 and Ser-24 each carry the phosphoserine modification. EF-hand domains are found at residues 39 to 74 and 78 to 110; these read KSADDVKKVFHMLDKDKSGFIEEDELGFILKGFSPD and LSAKETKMLMAAGDKDGDGKIGVDEFSTLVAES. Asp-52, Asp-54, Ser-56, Phe-58, Glu-60, Glu-63, Asp-91, Asp-93, Asp-95, Lys-97, and Glu-102 together coordinate Ca(2+).

Functionally, in muscle, parvalbumin is thought to be involved in relaxation after contraction. It binds two calcium ions. This chain is Parvalbumin alpha (PVALB), found in Homo sapiens (Human).